Reading from the N-terminus, the 1396-residue chain is G2/mitotic-specific cyclin-B3 (1396 aa).

Disordered stretches follow at residues 1-64 (MPPP…TNAS), 259-398 (KEKP…PQME), and 477-500 (TTEKDPPSQWPSALPKKHISPGEL). The span at 10–34 (SKLETEKAQSNKITPREEQQSEKIG) shows a compositional bias: basic and acidic residues. The D-box signature appears at 54–62 (RSVFEDVTN). Residues 264–273 (VKKPHFRKKK) show a composition bias toward basic residues. Over residues 306–315 (LQENTNNKDA) the composition is skewed to polar residues. At serine 703 the chain carries Phosphoserine. The tract at residues 775 to 796 (VDEPLSHQSPHIQNHSDTTKEA) is disordered. Polar residues predominate over residues 780–790 (SHQSPHIQNHS).

This sequence belongs to the cyclin family. Cyclin AB subfamily. Interacts with CDK2 kinase. In terms of processing, ubiquitinated. Ubiquitination leads to its degradation during anaphase entry, after degradation of CCNB1. Expressed in testis. Also expressed in the fetal ovary, but not in the adult.

Its subcellular location is the nucleus. Cyclins are positive regulatory subunits of the cyclin-dependent kinases (CDKs), and thereby play an essential role in the control of the cell cycle, notably via their destruction during cell division. Its tissue specificity suggest that it may be required during early meiotic prophase I. The protein is G2/mitotic-specific cyclin-B3 (Ccnb3) of Mus musculus (Mouse).